A 143-amino-acid chain; its full sequence is MESTLGSDLARLVRVWRALIDPRLKPLELTQTHWVTLYNINRLPPEQSQIQLAKAIGIEQPSLVRTLDQLEEKGLITRHTCANDRRAKRIKLTEQSSPIIEQVDGVICSTRKEILGGISSDEIAVLSGLIDKLEKNIIQLQTK.

Residues 2-135 form the HTH marR-type domain; it reads ESTLGSDLAR…LSGLIDKLEK (134 aa). Residues 49–72 constitute a DNA-binding region (H-T-H motif); sequence QIQLAKAIGIEQPSLVRTLDQLEE.

Belongs to the SlyA family. As to quaternary structure, homodimer.

Functionally, transcription regulator that can specifically activate or repress expression of target genes. The protein is Transcriptional regulator SlyA of Yersinia pestis bv. Antiqua (strain Antiqua).